The chain runs to 314 residues: tRNA pseudouridine synthase B (314 aa).

Asp41 serves as the catalytic Nucleophile.

It belongs to the pseudouridine synthase TruB family. Type 1 subfamily.

It catalyses the reaction uridine(55) in tRNA = pseudouridine(55) in tRNA. Its function is as follows. Responsible for synthesis of pseudouridine from uracil-55 in the psi GC loop of transfer RNAs. This Prochlorococcus marinus (strain NATL2A) protein is tRNA pseudouridine synthase B.